The chain runs to 529 residues: Arginine--tRNA ligase (529 aa).

Positions 113-123 match the 'HIGH' region motif; that stretch reads ANPTGPLHIGH.

It belongs to the class-I aminoacyl-tRNA synthetase family. As to quaternary structure, monomer.

Its subcellular location is the cytoplasm. It carries out the reaction tRNA(Arg) + L-arginine + ATP = L-arginyl-tRNA(Arg) + AMP + diphosphate. The protein is Arginine--tRNA ligase of Campylobacter curvus (strain 525.92).